A 144-amino-acid polypeptide reads, in one-letter code: 3-dehydroquinate dehydratase (144 aa).

Y24 acts as the Proton acceptor in catalysis. Substrate-binding residues include N76, H82, and D89. H102 (proton donor) is an active-site residue. Substrate-binding positions include L103 to S104 and R113.

The protein belongs to the type-II 3-dehydroquinase family. Homododecamer.

It catalyses the reaction 3-dehydroquinate = 3-dehydroshikimate + H2O. It participates in metabolic intermediate biosynthesis; chorismate biosynthesis; chorismate from D-erythrose 4-phosphate and phosphoenolpyruvate: step 3/7. Functionally, catalyzes a trans-dehydration via an enolate intermediate. The polypeptide is 3-dehydroquinate dehydratase (Bordetella avium (strain 197N)).